The primary structure comprises 290 residues: MTIRKVLNKYWGWTFLIVPLILQVVFFYFPMFQGAFYSFTNWTGLTYNFDFVGINNYKILMTDGKFMKAIGFTLVLTLALIVGEIVLGIIIARALNAKIKGKTFFRAWFFFPAVLSGLTVSLIFKQVFNYGLPAVGSALGIKFLETSMLGTANGAVIASIFVLLWQGVAMPIILFLSGLQSIPSEIVEAAAIDGADSKQTFWSVELPYLLPSISMVFIMALKAGLTAFDQIFALTGGGPNNSTTSLGLLVYNYAFKSNQYGYANAIALILFIIIGIVSVLQIKLSKKFEV.

7 helical membrane-spanning segments follow: residues 12–32 (GWTF…FPMF), 72–92 (FTLV…IIIA), 104–124 (FFRA…SLIF), 156–176 (VIAS…ILFL), 201–221 (FWSV…IMAL), 231–253 (IFAL…VYNY), and 260–280 (YGYA…VSVL). The 212-residue stretch at 70–281 (IGFTLVLTLA…IIIGIVSVLQ (212 aa)) folds into the ABC transmembrane type-1 domain.

It belongs to the binding-protein-dependent transport system permease family. MalFG subfamily.

It is found in the cell membrane. Functionally, involved in a binding protein-dependent transport system responsible for the uptake of melibiose, raffinose and isomaltotriose. In Streptococcus mutans serotype c (strain ATCC 700610 / UA159), this protein is Multiple sugar-binding transport system permease protein MsmF (msmF).